The chain runs to 120 residues: MGVKYSSKINKIRTFALSLIFIGFFVMYGGIFFRTSPIVMTLFMILGLLFIIASTVVYFWIGMLSTKTVQVVCPSCNKVTKMLGRVDVCMYCNEPLTLDPTLEGKEFDEKYNRKTRDKKS.

2 consecutive transmembrane segments (helical) span residues 12 to 32 (IRTF…GGIF) and 42 to 62 (LFMI…FWIG).

It belongs to the UPF0295 family.

The protein localises to the cell membrane. This Anoxybacillus flavithermus (strain DSM 21510 / WK1) protein is UPF0295 protein Aflv_0370.